A 798-amino-acid polypeptide reads, in one-letter code: Heterogeneous nuclear ribonucleoprotein U (798 aa).

S2 carries the post-translational modification N-acetylserine. Phosphoserine is present on S4. The SAP domain occupies 8-42 (VKKLKVSELKEELKKRRLSDKGLKADLMDRLQAAL). K17 and K21 each carry N6-acetyllysine. The disordered stretch occupies residues 41–229 (ALDNEAGGRP…VKRPREDHGR (189 aa)). S58 is modified (phosphoserine). Low complexity-rich tracts occupy residues 71 to 80 (AGLEQEAAAG) and 103 to 113 (ENGAAGAADAG). Composition is skewed to acidic residues over residues 114–128 (AMEEEEAASEDENGD) and 134–147 (EGEDELGDEEEGAG). Positions 153–169 (GEQQSQPPAAAQQASQQ) are enriched in low complexity. An N6-acetyllysine modification is found at K179. An ADP-ribosylserine modification is found at S180. The span at 192–203 (APPGARQGQQQA) shows a compositional bias: low complexity. Positions 207-229 (GKTEQKAGDKKRGVKRPREDHGR) are enriched in basic and acidic residues. R229 carries the citrulline modification. K239 bears the N6-acetyllysine; alternate mark. Residue K239 forms a Glycyl lysine isopeptide (Lys-Gly) (interchain with G-Cter in SUMO1); alternate linkage. K239 is covalently cross-linked (Glycyl lysine isopeptide (Lys-Gly) (interchain with G-Cter in SUMO2); alternate). Y240 is subject to Phosphotyrosine. A phosphoserine mark is found at S241 and S245. Residues 242–438 (RAKSPQPPVE…VEFNFGQKEK (197 aa)) form the B30.2/SPRY domain. At T260 the chain carries Phosphothreonine. K326 is modified (N6-acetyllysine). The interval 462–646 (PKGPEEKKDC…QKLLEQYKEE (185 aa)) is ATPase domain. K469 is covalently cross-linked (Glycyl lysine isopeptide (Lys-Gly) (interchain with G-Cter in SUMO2)). 478–485 (GLPGAGKT) provides a ligand contact to ATP. N6-acetyllysine; alternate is present on residues K490 and K498. Glycyl lysine isopeptide (Lys-Gly) (interchain with G-Cter in SUMO2); alternate cross-links involve residues K490 and K498. Residue T506 is modified to Phosphothreonine. K510 is covalently cross-linked (Glycyl lysine isopeptide (Lys-Gly) (interchain with G-Cter in SUMO2)). An N6-acetyllysine modification is found at K525. An N6-acetyllysine; alternate modification is found at K539. A Glycyl lysine isopeptide (Lys-Gly) (interchain with G-Cter in SUMO2); alternate cross-link involves residue K539. Residue K548 forms a Glycyl lysine isopeptide (Lys-Gly) (interchain with G-Cter in SUMO2) linkage. T556 is modified (phosphothreonine). Glycyl lysine isopeptide (Lys-Gly) (interchain with G-Cter in SUMO2) cross-links involve residues K583 and K600. Residues 585-600 (EDYKQRTQKKAEVEGK) are actin-binding. Position 609 is an N6-acetyllysine; alternate (K609). Residue K609 forms a Glycyl lysine isopeptide (Lys-Gly) (interchain with G-Cter in SUMO2); alternate linkage. Residues 624-651 (DEITYVELQKEEAQKLLEQYKEESKKAL) adopt a coiled-coil conformation. Glycyl lysine isopeptide (Lys-Gly) (interchain with G-Cter in SUMO2) cross-links involve residues K638 and K644. Residues 645 to 657 (EESKKALPPEKKQ) are compositionally biased toward basic and acidic residues. The segment at 645–727 (EESKKALPPE…GSGGIGYPYP (83 aa)) is disordered. Residue R676 is modified to Omega-N-methylarginine. Residues 684 to 702 (GGFNMRGGNFRGGAPGNRG) show a composition bias toward gly residues. Residues 688–713 (MRGGNFRGGAPGNRGGYNRRGNMPQR) form an RNA-binding RGG-box region. Asymmetric dimethylarginine is present on residues R689, R694, and R701. Asymmetric dimethylarginine; alternate is present on residues R707 and R713. 2 positions are modified to omega-N-methylarginine; alternate: R707 and R713. A compositionally biased stretch (gly residues) spans 713 to 723 (RGGGGGSGGIG). Residues R728 and R735 each carry the asymmetric dimethylarginine modification. The tract at residues 743–772 (NYNRGGMPNRGNYNQNFRGRGNNRGYKNQS) is disordered. K787 bears the N6-acetyllysine; alternate mark. A Glycyl lysine isopeptide (Lys-Gly) (interchain with G-Cter in SUMO2); alternate cross-link involves residue K787.

As to quaternary structure, oligomer (via ATPase domain and RNA-binding RGG-box region); oligomerization occurs upon ATP-binding in a chromatin-associated RNAs (caRNAs)- and transcription-dependent manner and is required for chromatin decompaction. ATP hydrolysis is required to cycle from an oligomeric to monomeric state to compact chromatin. Component of the coding region determinant (CRD)-mediated complex, composed of DHX9, HNRNPU, IGF2BP1, SYNCRIP and YBX1. Identified in the spliceosome C complex. Identified in a IGF2BP1-dependent mRNP granule complex containing untranslated mRNAs. Associates with heterogeneous nuclear ribonucleoprotein (hnRNP) particles. Associates (via middle region) with the C-terminal domain (CTD) RNA polymerase II (Pol II) holoenzyme; this association occurs in a RNA-independent manner. Associates (via middle region) with the core-TFIIH basal transcription factor complex; this association inhibits the CTD phosphorylation of RNA polymerase II holoenzyme by down-regulating TFIIH kinase activity. Associates with the telomerase holoenzyme complex. Associates with spindle microtubules (MTs) in a TPX2-dependent manner. Interacts (via C-terminus) with actin; this interaction is direct and mediates association with the phosphorylated CTD of RNA polymerase II and is disrupted in presence of the long non-coding H19 RNA. Interacts with AURKA. Interacts (via C-terminus) with CBX5; this interaction is, at least in part, RNA-dependent. Interacts with CR2. Interacts with CRY1. Interacts (via C-terminus) with EP300; this interaction enhances DNA-binding to nuclear scaffold/matrix attachment region (S/MAR) elements. Interacts with ERBB4. Interacts with GEMIN5. Interacts with IGF2BP1. Interacts with IGF2BP2 and IGF2BP3. Interacts with NCL; this interaction occurs during mitosis. Interacts (via C-terminus) with NR3C1 (via C-terminus). Interacts with PLK1; this interaction induces phosphorylation of HNRNPU at Ser-58 in mitosis. Interacts with POU3F4. Interacts with SMARCA4; this interaction occurs in embryonic stem cells and stimulates global Pol II-mediated transcription. Interacts (via C-terminus) with TOP2A; this interaction protects the topoisomerase TOP2A from degradation and positively regulates the relaxation of supercoiled DNA by TOP2A in a RNA-dependent manner. Interacts with TPX2; this interaction recruits HNRNPU to spindle microtubules (MTs). Interacts with UBQLN2. Interacts (via RNA-binding RGG-box region) with ZBTB7B; the interaction facilitates the recruitment of long non-coding RNA Blnc1 by ZBTB7B. Interacts with ERCC6. In terms of processing, cleaved at Asp-94 by CASP3 during T-cell apoptosis, resulting in a loss of DNA- and chromatin-binding activities. Post-translationally, extensively phosphorylated. Phosphorylated on Ser-58 by PLK1 and dephosphorylated by protein phosphatase 2A (PP2A) in mitosis. Arg-707 and Arg-713 are dimethylated, probably to asymmetric dimethylarginine. In terms of processing, citrullinated by PADI4.

It is found in the nucleus. The protein resides in the nucleus matrix. Its subcellular location is the chromosome. The protein localises to the nucleus speckle. It localises to the cytoplasm. It is found in the cytoskeleton. The protein resides in the microtubule organizing center. Its subcellular location is the centrosome. The protein localises to the centromere. It localises to the kinetochore. It is found in the spindle. The protein resides in the spindle pole. Its subcellular location is the midbody. The protein localises to the cell surface. It localises to the cytoplasmic granule. Its function is as follows. DNA- and RNA-binding protein involved in several cellular processes such as nuclear chromatin organization, telomere-length regulation, transcription, mRNA alternative splicing and stability, Xist-mediated transcriptional silencing and mitotic cell progression. Plays a role in the regulation of interphase large-scale gene-rich chromatin organization through chromatin-associated RNAs (caRNAs) in a transcription-dependent manner, and thereby maintains genomic stability. Required for the localization of the long non-coding Xist RNA on the inactive chromosome X (Xi) and the subsequent initiation and maintenance of X-linked transcriptional gene silencing during X-inactivation. Required for the topoisomerase TOP2A protein stability and activity in a RNA-dependent manner. Plays a role as a RNA polymerase II (Pol II) holoenzyme transcription regulator. Promotes transcription initiation by direct association with the core-TFIIH basal transcription factor complex for the assembly of a functional pre-initiation complex with Pol II in a actin-dependent manner. Blocks Pol II transcription elongation activity by inhibiting the C-terminal domain (CTD) phosphorylation of Pol II and dissociates from Pol II pre-initiation complex prior to productive transcription elongation. Positively regulates CBX5-induced transcriptional gene silencing and retention of CBX5 in the nucleus. Negatively regulates glucocorticoid-mediated transcriptional activation. Key regulator of transcription initiation and elongation in embryonic stem cells upon leukemia inhibitory factor (LIF) signaling. Involved in the long non-coding RNA H19-mediated Pol II transcriptional repression. Participates in the circadian regulation of the core clock component BMAL1 transcription. Plays a role in the regulation of telomere length. Plays a role as a global pre-mRNA alternative splicing modulator by regulating U2 small nuclear ribonucleoprotein (snRNP) biogenesis. Plays a role in mRNA stability. Component of the CRD-mediated complex that promotes MYC mRNA stabilization. Enhances the expression of specific genes, such as tumor necrosis factor TNFA, by regulating mRNA stability, possibly through binding to the 3'-untranslated region (UTR). Plays a role in mitotic cell cycle regulation. Involved in the formation of stable mitotic spindle microtubules (MTs) attachment to kinetochore, spindle organization and chromosome congression. Phosphorylation at Ser-58 by PLK1 is required for chromosome alignement and segregation and progression through mitosis. Also contributes to the targeting of AURKA to mitotic spindle MTs. Binds to double- and single-stranded DNA and RNA, poly(A), poly(C) and poly(G) oligoribonucleotides. Binds to chromatin-associated RNAs (caRNAs). Associates with chromatin to scaffold/matrix attachment region (S/MAR) elements in DNA. Associates with chromatin in a chromatin-associated RNAs (caRNAs)-dependent manner. Binds to the Xist RNA. Binds the long non-coding H19 RNA. Binds to SMN1/2 pre-mRNAs at G/U-rich regions. Binds to small nuclear RNAs (snRNAs). Binds to the 3'-UTR of TNFA mRNA. Binds (via RNA-binding RGG-box region) to the long non-coding Xist RNA; this binding is direct and bridges the Xist RNA and the inactive chromosome X (Xi). Also negatively regulates embryonic stem cell differentiation upon LIF signaling. Required for embryonic development. Binds to brown fat long non-coding RNA 1 (Blnc1); facilitates the recruitment of Blnc1 by ZBTB7B required to drive brown and beige fat development and thermogenesis. The sequence is that of Heterogeneous nuclear ribonucleoprotein U from Rattus norvegicus (Rat).